Consider the following 212-residue polypeptide: Thymidylate kinase (212 aa).

Position 10-17 (10-17) interacts with ATP; that stretch reads GPEGAGKT.

Belongs to the thymidylate kinase family.

It catalyses the reaction dTMP + ATP = dTDP + ADP. Its function is as follows. Phosphorylation of dTMP to form dTDP in both de novo and salvage pathways of dTTP synthesis. The chain is Thymidylate kinase from Bacillus pumilus (strain SAFR-032).